A 250-amino-acid polypeptide reads, in one-letter code: Pyrroloquinoline-quinone synthase (250 aa).

The protein belongs to the PqqC family.

It carries out the reaction 6-(2-amino-2-carboxyethyl)-7,8-dioxo-1,2,3,4,7,8-hexahydroquinoline-2,4-dicarboxylate + 3 O2 = pyrroloquinoline quinone + 2 H2O2 + 2 H2O + H(+). It functions in the pathway cofactor biosynthesis; pyrroloquinoline quinone biosynthesis. Its function is as follows. Ring cyclization and eight-electron oxidation of 3a-(2-amino-2-carboxyethyl)-4,5-dioxo-4,5,6,7,8,9-hexahydroquinoline-7,9-dicarboxylic-acid to PQQ. The polypeptide is Pyrroloquinoline-quinone synthase (Xanthomonas campestris pv. campestris (strain B100)).